Reading from the N-terminus, the 506-residue chain is Plant intracellular Ras-group-related LRR protein 1 (506 aa).

The interval Thr24–His48 is disordered. The stretch at Lys143–Glu193 forms a coiled coil. LRR repeat units lie at residues Glu203–Lys225, Ile226–Leu249, Asn251–Leu272, Ser273–Cys295, Ser297–Leu319, Val320–Met342, Ser344–Leu364, Leu365–Asp389, Leu390–Thr412, and Val414–Gln436. The GVYW signature appears at Gly437–Trp449.

This sequence belongs to the SHOC2 family. Widely expressed.

In terms of biological role, leucine-rich repeat protein that likely mediates protein interactions, possibly in the context of signal transduction. PIRL1 acts redundantly with PIRL9 in the differentiation of microspores into pollen. This chain is Plant intracellular Ras-group-related LRR protein 1 (PIRL1), found in Arabidopsis thaliana (Mouse-ear cress).